We begin with the raw amino-acid sequence, 348 residues long: tRNA N6-adenosine threonylcarbamoyltransferase (348 aa).

Residues histidine 111 and histidine 115 each coordinate Fe cation. Residues 134 to 138, aspartate 167, glycine 180, and asparagine 276 each bind substrate; that span reads LVSGG. A Fe cation-binding site is contributed by aspartate 304.

Belongs to the KAE1 / TsaD family. It depends on Fe(2+) as a cofactor.

The protein resides in the cytoplasm. The enzyme catalyses L-threonylcarbamoyladenylate + adenosine(37) in tRNA = N(6)-L-threonylcarbamoyladenosine(37) in tRNA + AMP + H(+). Functionally, required for the formation of a threonylcarbamoyl group on adenosine at position 37 (t(6)A37) in tRNAs that read codons beginning with adenine. Is involved in the transfer of the threonylcarbamoyl moiety of threonylcarbamoyl-AMP (TC-AMP) to the N6 group of A37, together with TsaE and TsaB. TsaD likely plays a direct catalytic role in this reaction. The sequence is that of tRNA N6-adenosine threonylcarbamoyltransferase from Bordetella petrii (strain ATCC BAA-461 / DSM 12804 / CCUG 43448).